Reading from the N-terminus, the 911-residue chain is Protein SOSEKI (911 aa).

The DIX-like oligomerization domain stretch occupies residues 15–107 (TKVQVVYYLS…LVLKGSELYT (93 aa)). Disordered stretches follow at residues 219–470 (SETL…TQCE) and 492–810 (LCGN…PPRI). Composition is skewed to basic and acidic residues over residues 253 to 286 (TDRE…EVSR) and 295 to 407 (EAPR…EELP). The span at 414 to 423 (SPTCSESGDS) shows a compositional bias: polar residues. Residues 452-467 (SSSTRSSTPSTSAAST) are compositionally biased toward low complexity. The Association to cell membranes motif lies at 493–494 (CG). Residues 511-527 (PLAAAAQPASGAVPQSP) show a composition bias toward low complexity. Residues 591–607 (SGVNSAMATPFLQTENN) show a composition bias toward polar residues. Residues 608–662 (SPSSSESSSAAVSSGKKPASISLSGTSDASDGGNGASSTASSSSEVQNNVSVKEV) show a composition bias toward low complexity. The span at 663–683 (ITQQLPSPSSSEGRPSLNIDT) shows a compositional bias: polar residues. The segment covering 696–709 (SDVRETVKTTRPDS) has biased composition (basic and acidic residues). The span at 722–733 (PVRTQLSSSPSF) shows a compositional bias: polar residues. The span at 735–771 (KRIEDARARARSLVSKEIRSGESRSSKDLLKENDRVK) shows a compositional bias: basic and acidic residues. Residues 772–784 (TSSGSMRSGSTRT) are compositionally biased toward low complexity. Over residues 785–805 (PNNKNGTTGAGSKTLSGTFNR) the composition is skewed to polar residues. The segment at 864 to 893 (ILQECGQCGRTFKPDSLKVHMRGCHALRRS) adopts a C2HC/C3H-type zinc-finger fold. Residues Cys868, Cys871, His883, and Cys887 each coordinate Zn(2+).

Belongs to the SOSEKI family. As to quaternary structure, homodimer. Forms long polymer filaments with other SOKs proteins polymers crucial for polar localization and biological activity. Requires Zn(2+) as cofactor.

It is found in the cell membrane. Its function is as follows. SOSEKI proteins locally interpret global polarity cues and can influence cell division orientation to coordinate cell polarization relative to body axes. This Marchantia polymorpha (Common liverwort) protein is Protein SOSEKI.